The primary structure comprises 612 residues: Threonine--tRNA ligase (612 aa).

A catalytic region spans residues 218 to 509 (DHRKLGVELG…LSEHFWGNFP (292 aa)). C310, H361, and H486 together coordinate Zn(2+).

The protein belongs to the class-II aminoacyl-tRNA synthetase family. As to quaternary structure, homodimer. Zn(2+) is required as a cofactor.

The protein resides in the cytoplasm. It carries out the reaction tRNA(Thr) + L-threonine + ATP = L-threonyl-tRNA(Thr) + AMP + diphosphate + H(+). Functionally, catalyzes the attachment of threonine to tRNA(Thr) in a two-step reaction: L-threonine is first activated by ATP to form Thr-AMP and then transferred to the acceptor end of tRNA(Thr). Also edits incorrectly charged L-seryl-tRNA(Thr). In Helicobacter acinonychis (strain Sheeba), this protein is Threonine--tRNA ligase.